Reading from the N-terminus, the 668-residue chain is Metastasis-associated protein MTA2 (668 aa).

Residues Met-1–Gln-144 enclose the BAH domain. Ser-52 and Ser-54 each carry phosphoserine. The region spanning Gly-145 to Gly-256 is the ELM2 domain. Lys-152 carries the post-translational modification N6-acetyllysine. One can recognise an SANT domain in the interval Asp-263–Arg-315. Residues Cys-367–Cys-394 form a GATA-type; atypical zinc finger. Polar residues predominate over residues Gln-409–Glu-419. Positions Gln-409 to Tyr-437 are disordered. Ser-433 and Ser-435 each carry phosphoserine. Lys-460 is modified (N6-acetyllysine). Lys-492 is covalently cross-linked (Glycyl lysine isopeptide (Lys-Gly) (interchain with G-Cter in SUMO2 and SUMO3); alternate). Lys-492 is covalently cross-linked (Glycyl lysine isopeptide (Lys-Gly) (interchain with G-Cter in SUMO2); alternate). Lys-508 participates in a covalent cross-link: Glycyl lysine isopeptide (Lys-Gly) (interchain with G-Cter in SUMO2). An N6-acetyllysine mark is found at Lys-522 and Lys-531. Thr-534 is modified (phosphothreonine). Position 548 is a phosphoserine (Ser-548). Glycyl lysine isopeptide (Lys-Gly) (interchain with G-Cter in SUMO2) cross-links involve residues Lys-559 and Lys-595. Disordered regions lie at residues Ala-580–Ala-599 and Pro-647–Asp-668.

Belongs to the metastasis-associated protein family. Component of the nucleosome remodeling and deacetylase (NuRD) repressor complex, composed of core proteins MTA1, MTA2, MTA3, RBBP4, RBBP7, HDAC1, HDAC2, MBD2, MBD3, and peripherally associated proteins CDK2AP1, CDK2AP2, GATAD2A, GATAD2B, CHD3, CHD4 and CHD5. The exact stoichiometry of the NuRD complex is unknown, and some subunits such as MBD2 and MBD3, GATAD2A and GATAD2B, and CHD3, CHD4 and CHD5 define mutually exclusive NuRD complexes. Interacts with CHD3. Interacts with CHD4. Interacts with GATAD2A. Interacts with HDAC7. Interacts with MBD3. Interacts with p53/TP53. Interacts with MINT. Interacts with PIMREG. Interacts with NACC2. Interacts with ERCC6. Interacts with PWWP2B. Interacts with transcription factor BCL11A. In terms of tissue distribution, widely expressed.

The protein localises to the nucleus. In terms of biological role, may function as a transcriptional coregulator. Acts as a component of the histone deacetylase NuRD complex which participates in the remodeling of chromatin. In Homo sapiens (Human), this protein is Metastasis-associated protein MTA2 (MTA2).